The chain runs to 275 residues: Glutamate racemase (275 aa).

Residues 10–11 (DS) and 42–43 (YG) each bind substrate. The active-site Proton donor/acceptor is the Cys-74. 75–76 (NT) is a substrate binding site. Catalysis depends on Cys-189, which acts as the Proton donor/acceptor. 190 to 191 (TH) contributes to the substrate binding site.

The protein belongs to the aspartate/glutamate racemases family.

It catalyses the reaction L-glutamate = D-glutamate. The protein operates within cell wall biogenesis; peptidoglycan biosynthesis. In terms of biological role, provides the (R)-glutamate required for cell wall biosynthesis. This is Glutamate racemase from Bartonella tribocorum (strain CIP 105476 / IBS 506).